Consider the following 165-residue polypeptide: MLMPKKDRIAIYELLFKEGVMVAKKDVHMPKHPELADKNVPNLHVMKAMQSLKSRGYVKEQFAWRHFYWYLTNEGIQYLRDFLHLPPEIVPATLRRSRPETGRPRPKGLEGERPPRLPRGETDRDTYRRSAVPSGADKKAEAGAGAATEFQFRGGFGRGRGQAPQ.

Residues 92 to 165 (ATLRRSRPET…FGRGRGQAPQ (74 aa)) form a disordered region. Basic and acidic residues predominate over residues 97–128 (SRPETGRPRPKGLEGERPPRLPRGETDRDTYR). Residues 142–153 (AGAGAATEFQFR) show a composition bias toward low complexity. The segment covering 154–165 (GGFGRGRGQAPQ) has biased composition (gly residues).

This sequence belongs to the eukaryotic ribosomal protein eS10 family. In terms of assembly, component of the small ribosomal subunit.

Its subcellular location is the cytoplasm. It localises to the nucleus. The protein resides in the nucleolus. Component of the 40S ribosomal subunit. The ribosome is a large ribonucleoprotein complex responsible for the synthesis of proteins in the cell. The sequence is that of Small ribosomal subunit protein eS10 (rps10) from Xenopus laevis (African clawed frog).